A 393-amino-acid chain; its full sequence is UPF0496 protein At2g18630 (393 aa).

The interval 1–20 (MMGGKSSKSKKNVEFGSPST) is disordered. Positions 149–222 (VNQFEEENED…RLRNIKTWRR (74 aa)) form a coiled coil. Transmembrane regions (helical) follow at residues 226–246 (MVFV…AAVA) and 249–269 (PVVA…GKWC). The stretch at 299–356 (KEMDNISILVRKVEVEIESLLKKAEFAITEEKEVRLAIDEIKKKLDVFTETIEELGEH) forms a coiled coil.

This sequence belongs to the UPF0496 family.

The protein resides in the membrane. In Arabidopsis thaliana (Mouse-ear cress), this protein is UPF0496 protein At2g18630.